A 648-amino-acid chain; its full sequence is DNA polymerase (648 aa).

It belongs to the DNA polymerase type-A family.

It carries out the reaction DNA(n) + a 2'-deoxyribonucleoside 5'-triphosphate = DNA(n+1) + diphosphate. In terms of biological role, replicates the viral genomic DNA. This polymerase possesses two enzymatic activities: DNA synthesis (polymerase) and an exonucleolytic activity that degrades single-stranded DNA in the 3'-5' direction. This is DNA polymerase (L) from Bacillus subtilis (Bacteriophage SP02).